The chain runs to 799 residues: Pentatricopeptide repeat-containing protein At2g26790, mitochondrial (799 aa).

A mitochondrion-targeting transit peptide spans Met-1–Tyr-27. PPR repeat units follow at residues Leu-145–Val-179, Asp-180–Ala-214, Asn-215–Thr-250, Phe-251–Ala-278, Leu-282–Leu-316, Asp-317–Val-351, Asn-352–Leu-386, Asp-387–Pro-421, Asp-422–Pro-456, Asp-457–Pro-491, Asn-492–Lys-522, Cys-523–Pro-553, Arg-555–Pro-589, Gly-590–Pro-624, Asp-625–Pro-659, Asp-660–Glu-695, Asp-708–Pro-742, and Asp-743–Pro-777.

It belongs to the PPR family. P subfamily.

The protein resides in the mitochondrion. In Arabidopsis thaliana (Mouse-ear cress), this protein is Pentatricopeptide repeat-containing protein At2g26790, mitochondrial.